The primary structure comprises 166 residues: Photosystem I assembly protein Ycf3 (166 aa).

TPR repeat units follow at residues 31-64 (AFKY…EEDP), 68-101 (SYIL…NPNL), and 116-149 (GEQA…APNN).

This sequence belongs to the Ycf3 family.

It is found in the cellular thylakoid membrane. Functionally, essential for the assembly of the photosystem I (PSI) complex. May act as a chaperone-like factor to guide the assembly of the PSI subunits. The chain is Photosystem I assembly protein Ycf3 from Acaryochloris marina (strain MBIC 11017).